A 469-amino-acid chain; its full sequence is Glutamate--tRNA ligase (469 aa).

Positions 11–21 (PSPTGFIHLGN) match the 'HIGH' region motif. Over residues 118–131 (GEKPRYDGTWRPEP) the composition is skewed to basic and acidic residues. Positions 118 to 139 (GEKPRYDGTWRPEPGKVLPEPP) are disordered. The short motif at 243–247 (KMSKR) is the 'KMSKS' region element. ATP is bound at residue K246.

It belongs to the class-I aminoacyl-tRNA synthetase family. Glutamate--tRNA ligase type 1 subfamily. In terms of assembly, monomer.

The protein resides in the cytoplasm. It catalyses the reaction tRNA(Glu) + L-glutamate + ATP = L-glutamyl-tRNA(Glu) + AMP + diphosphate. In terms of biological role, catalyzes the attachment of glutamate to tRNA(Glu) in a two-step reaction: glutamate is first activated by ATP to form Glu-AMP and then transferred to the acceptor end of tRNA(Glu). The protein is Glutamate--tRNA ligase of Burkholderia pseudomallei (strain 1106a).